Consider the following 360-residue polypeptide: 3-isopropylmalate dehydrogenase (360 aa).

Position 76-89 (76-89 (GPKWDKIERDIRPE)) interacts with NAD(+). Substrate contacts are provided by arginine 96, arginine 106, arginine 134, and aspartate 224. 3 residues coordinate Mg(2+): aspartate 224, aspartate 248, and aspartate 252. Residue 282 to 294 (GSAPDIAGQGIAN) coordinates NAD(+).

It belongs to the isocitrate and isopropylmalate dehydrogenases family. LeuB type 1 subfamily. As to quaternary structure, homodimer. The cofactor is Mg(2+). It depends on Mn(2+) as a cofactor.

The protein localises to the cytoplasm. The catalysed reaction is (2R,3S)-3-isopropylmalate + NAD(+) = 4-methyl-2-oxopentanoate + CO2 + NADH. It participates in amino-acid biosynthesis; L-leucine biosynthesis; L-leucine from 3-methyl-2-oxobutanoate: step 3/4. In terms of biological role, catalyzes the oxidation of 3-carboxy-2-hydroxy-4-methylpentanoate (3-isopropylmalate) to 3-carboxy-4-methyl-2-oxopentanoate. The product decarboxylates to 4-methyl-2 oxopentanoate. In Pseudomonas fluorescens (strain ATCC BAA-477 / NRRL B-23932 / Pf-5), this protein is 3-isopropylmalate dehydrogenase.